Reading from the N-terminus, the 231-residue chain is Urease subunit gamma/beta (231 aa).

The segment at 1-101 (MLLTPTELER…LVTVHQPIRP (101 aa)) is urease gamma. The interval 102–231 (GQLPLAVMPT…RARAQFFKGA (130 aa)) is urease beta.

The protein in the N-terminal section; belongs to the urease gamma subunit family. In the C-terminal section; belongs to the urease beta subunit family. As to quaternary structure, heterohexamer of 3 UreC (alpha) and 3 UreAB (gamma/beta) subunits.

It is found in the cytoplasm. It catalyses the reaction urea + 2 H2O + H(+) = hydrogencarbonate + 2 NH4(+). Its pathway is nitrogen metabolism; urea degradation; CO(2) and NH(3) from urea (urease route): step 1/1. This chain is Urease subunit gamma/beta, found in Pseudomonas syringae pv. syringae (strain B728a).